A 20-amino-acid polypeptide reads, in one-letter code: Apidaecin 1+ (20 aa).

The disordered stretch occupies residues 1 to 20 (GKPNRPRPAPIQPRPPHPRL).

This sequence belongs to the apidaecin family.

The protein localises to the secreted. In terms of biological role, antimicrobial peptide active against many Gram-negative enterobacterial and plant-associated bacterial species. Not active against other bacterial species like H.pylori, P.mirabilis, B.pertussis or N.gonorrhoeae. Functionally, among others, also active against C.jejuni and L.pneumophila but not against Y.enterocolitica. Its function is as follows. Among others, also active against Y.enterocolitica butnot against L.pneumophila and C.jejuni. The chain is Apidaecin 1+ from Pimpla disparis (Parasitic wasp).